The chain runs to 194 residues: Orotate phosphoribosyltransferase (194 aa).

5-phospho-alpha-D-ribose 1-diphosphate contacts are provided by residues Lys98 and Glu122 to Ser130. Orotate is bound by residues Thr126 and Arg154.

Belongs to the purine/pyrimidine phosphoribosyltransferase family. PyrE subfamily. Homodimer. Mg(2+) is required as a cofactor.

It carries out the reaction orotidine 5'-phosphate + diphosphate = orotate + 5-phospho-alpha-D-ribose 1-diphosphate. The protein operates within pyrimidine metabolism; UMP biosynthesis via de novo pathway; UMP from orotate: step 1/2. Catalyzes the transfer of a ribosyl phosphate group from 5-phosphoribose 1-diphosphate to orotate, leading to the formation of orotidine monophosphate (OMP). The sequence is that of Orotate phosphoribosyltransferase from Deinococcus radiodurans (strain ATCC 13939 / DSM 20539 / JCM 16871 / CCUG 27074 / LMG 4051 / NBRC 15346 / NCIMB 9279 / VKM B-1422 / R1).